A 500-amino-acid polypeptide reads, in one-letter code: Protein DETOXIFICATION 29 (500 aa).

A run of 12 helical transmembrane segments spans residues 67 to 87, 91 to 111, 132 to 152, 161 to 181, 197 to 217, 227 to 247, 277 to 297, 302 to 322, 349 to 369, 393 to 413, 419 to 439, and 449 to 469; these read GAIT…AVSV, VVAG…ETLC, VILN…APIL, ISSA…AYAI, VMAV…WFVI, LAVV…VYIF, AVML…AGYL, ISVA…MIAI, LVAV…LLIF, ILAL…VAVG, VVAY…GLLL, and GIWC…TWMI.

It belongs to the multi antimicrobial extrusion (MATE) (TC 2.A.66.1) family.

It is found in the vacuole membrane. This chain is Protein DETOXIFICATION 29, found in Arabidopsis thaliana (Mouse-ear cress).